Reading from the N-terminus, the 38-residue chain is Large ribosomal subunit protein bL36 (38 aa).

Belongs to the bacterial ribosomal protein bL36 family.

The protein is Large ribosomal subunit protein bL36 of Methylacidiphilum infernorum (isolate V4) (Methylokorus infernorum (strain V4)).